The chain runs to 661 residues: UvrABC system protein B (661 aa).

Residues 26-413 (KGINEGRKHQ…TPEMVEQIIR (388 aa)) enclose the Helicase ATP-binding domain. Residue 39–46 (GATGTGKT) coordinates ATP. The Beta-hairpin signature appears at 92-115 (YYDYYQPEAYVPQTDTFIEKDASI). One can recognise a Helicase C-terminal domain in the interval 430–596 (QIDDLIGEIQ…TINKKIRDVI (167 aa)). One can recognise a UVR domain in the interval 625-660 (EKVIAQMESDMKEAAKALDFERAAELRDLLLELKSE).

The protein belongs to the UvrB family. Forms a heterotetramer with UvrA during the search for lesions. Interacts with UvrC in an incision complex.

The protein localises to the cytoplasm. Its function is as follows. The UvrABC repair system catalyzes the recognition and processing of DNA lesions. A damage recognition complex composed of 2 UvrA and 2 UvrB subunits scans DNA for abnormalities. Upon binding of the UvrA(2)B(2) complex to a putative damaged site, the DNA wraps around one UvrB monomer. DNA wrap is dependent on ATP binding by UvrB and probably causes local melting of the DNA helix, facilitating insertion of UvrB beta-hairpin between the DNA strands. Then UvrB probes one DNA strand for the presence of a lesion. If a lesion is found the UvrA subunits dissociate and the UvrB-DNA preincision complex is formed. This complex is subsequently bound by UvrC and the second UvrB is released. If no lesion is found, the DNA wraps around the other UvrB subunit that will check the other stand for damage. The chain is UvrABC system protein B from Bacillus licheniformis (strain ATCC 14580 / DSM 13 / JCM 2505 / CCUG 7422 / NBRC 12200 / NCIMB 9375 / NCTC 10341 / NRRL NRS-1264 / Gibson 46).